A 436-amino-acid polypeptide reads, in one-letter code: UDP-N-acetylglucosamine 1-carboxyvinyltransferase 1 (436 aa).

Residue K22–N23 coordinates phosphoenolpyruvate. Position 93 (R93) interacts with UDP-N-acetyl-alpha-D-glucosamine. Residue C117 is the Proton donor of the active site. C117 carries the post-translational modification 2-(S-cysteinyl)pyruvic acid O-phosphothioketal. UDP-N-acetyl-alpha-D-glucosamine-binding positions include R122–Q126, D306, and V328.

It belongs to the EPSP synthase family. MurA subfamily.

Its subcellular location is the cytoplasm. It carries out the reaction phosphoenolpyruvate + UDP-N-acetyl-alpha-D-glucosamine = UDP-N-acetyl-3-O-(1-carboxyvinyl)-alpha-D-glucosamine + phosphate. Its pathway is cell wall biogenesis; peptidoglycan biosynthesis. Functionally, cell wall formation. Adds enolpyruvyl to UDP-N-acetylglucosamine. This Bacillus licheniformis (strain ATCC 14580 / DSM 13 / JCM 2505 / CCUG 7422 / NBRC 12200 / NCIMB 9375 / NCTC 10341 / NRRL NRS-1264 / Gibson 46) protein is UDP-N-acetylglucosamine 1-carboxyvinyltransferase 1.